We begin with the raw amino-acid sequence, 226 residues long: Orotate phosphoribosyltransferase (226 aa).

Lysine 29 contributes to the 5-phospho-alpha-D-ribose 1-diphosphate binding site. 37 to 38 (FF) serves as a coordination point for orotate. 5-phospho-alpha-D-ribose 1-diphosphate-binding positions include 75-76 (YK), arginine 101, lysine 102, lysine 105, histidine 107, and 126-134 (DDVISAGTS). 2 residues coordinate orotate: serine 130 and arginine 158.

It belongs to the purine/pyrimidine phosphoribosyltransferase family. PyrE subfamily. As to quaternary structure, homodimer. It depends on Mg(2+) as a cofactor.

It carries out the reaction orotidine 5'-phosphate + diphosphate = orotate + 5-phospho-alpha-D-ribose 1-diphosphate. It functions in the pathway pyrimidine metabolism; UMP biosynthesis via de novo pathway; UMP from orotate: step 1/2. In terms of biological role, catalyzes the transfer of a ribosyl phosphate group from 5-phosphoribose 1-diphosphate to orotate, leading to the formation of orotidine monophosphate (OMP). In Ralstonia nicotianae (strain ATCC BAA-1114 / GMI1000) (Ralstonia solanacearum), this protein is Orotate phosphoribosyltransferase.